A 353-amino-acid chain; its full sequence is UDP-N-acetylglucosamine--N-acetylmuramyl-(pentapeptide) pyrophosphoryl-undecaprenol N-acetylglucosamine transferase (353 aa).

UDP-N-acetyl-alpha-D-glucosamine contacts are provided by residues Thr-10–Gly-12, Asn-124, Ser-183, and Gln-283.

This sequence belongs to the glycosyltransferase 28 family. MurG subfamily.

It is found in the cell inner membrane. It catalyses the reaction di-trans,octa-cis-undecaprenyl diphospho-N-acetyl-alpha-D-muramoyl-L-alanyl-D-glutamyl-meso-2,6-diaminopimeloyl-D-alanyl-D-alanine + UDP-N-acetyl-alpha-D-glucosamine = di-trans,octa-cis-undecaprenyl diphospho-[N-acetyl-alpha-D-glucosaminyl-(1-&gt;4)]-N-acetyl-alpha-D-muramoyl-L-alanyl-D-glutamyl-meso-2,6-diaminopimeloyl-D-alanyl-D-alanine + UDP + H(+). Its pathway is cell wall biogenesis; peptidoglycan biosynthesis. Functionally, cell wall formation. Catalyzes the transfer of a GlcNAc subunit on undecaprenyl-pyrophosphoryl-MurNAc-pentapeptide (lipid intermediate I) to form undecaprenyl-pyrophosphoryl-MurNAc-(pentapeptide)GlcNAc (lipid intermediate II). The sequence is that of UDP-N-acetylglucosamine--N-acetylmuramyl-(pentapeptide) pyrophosphoryl-undecaprenol N-acetylglucosamine transferase from Helicobacter pylori (strain Shi470).